The sequence spans 485 residues: MSLFDHKISELKRLIHNKEISISDLVDESYKRIHEVDGKVQAFLQLDEEKARAYAKELDEALDTRDEHGLLFGMPIGIKDNIVTKDLRTTCASKILENFDPIYDATVVERLHEAEAVTIGKLNMDEFAMGSSTENSGFKKTKNPWNLETVPGGSSGGSAAAVAAGEVPFSLGSDTGGSIRQPASFCGVVGLKPTYGRVSRYGLVAFASSLDQIGPITRSVEDNAYLLQAISGVDKMDSTSANVDVPDYLSALTGDIKGLKIAVPKEYLGEGVSEEAKQSVLEALKVLESLGATWEEVSLPHSKYALATYYLLSSSEASANLARFDGIRYGYRTDNADNLIDLYKQTRSEGFGNEVKRRIMLGTFALSSGYYDAYYKKAQKVRTLIKKDFEDVFANYDVIIGPTTPTPAFKIGEKTSDPLTMYANDILTIPVNLAGVPGISVPCGFANGLPLGLQIIGKHFDESTVYRVAHAFEQATDHHKAKPEL.

Residues Lys79 and Ser154 each act as charge relay system in the active site. The active-site Acyl-ester intermediate is Ser178.

Belongs to the amidase family. GatA subfamily. As to quaternary structure, heterotrimer of A, B and C subunits.

The enzyme catalyses L-glutamyl-tRNA(Gln) + L-glutamine + ATP + H2O = L-glutaminyl-tRNA(Gln) + L-glutamate + ADP + phosphate + H(+). Functionally, allows the formation of correctly charged Gln-tRNA(Gln) through the transamidation of misacylated Glu-tRNA(Gln) in organisms which lack glutaminyl-tRNA synthetase. The reaction takes place in the presence of glutamine and ATP through an activated gamma-phospho-Glu-tRNA(Gln). This Bacillus licheniformis (strain ATCC 14580 / DSM 13 / JCM 2505 / CCUG 7422 / NBRC 12200 / NCIMB 9375 / NCTC 10341 / NRRL NRS-1264 / Gibson 46) protein is Glutamyl-tRNA(Gln) amidotransferase subunit A.